Reading from the N-terminus, the 432-residue chain is Adenylosuccinate synthetase (432 aa).

GTP-binding positions include 13-19 and 41-43; these read GDEGKGK and GHT. Residue aspartate 14 is the Proton acceptor of the active site. The Mg(2+) site is built by aspartate 14 and glycine 41. Residues 14 to 17, 39 to 42, threonine 130, arginine 144, glutamine 225, threonine 240, and arginine 304 contribute to the IMP site; these read DEGK and NAGH. Histidine 42 serves as the catalytic Proton donor. 300–306 contributes to the substrate binding site; sequence ATTGRRR. GTP-binding positions include arginine 306, 332 to 334, and 415 to 417; these read KLD and STG.

The protein belongs to the adenylosuccinate synthetase family. Homodimer. Mg(2+) serves as cofactor.

The protein resides in the cytoplasm. It catalyses the reaction IMP + L-aspartate + GTP = N(6)-(1,2-dicarboxyethyl)-AMP + GDP + phosphate + 2 H(+). It participates in purine metabolism; AMP biosynthesis via de novo pathway; AMP from IMP: step 1/2. Functionally, plays an important role in the de novo pathway of purine nucleotide biosynthesis. Catalyzes the first committed step in the biosynthesis of AMP from IMP. The polypeptide is Adenylosuccinate synthetase (Pectobacterium atrosepticum (strain SCRI 1043 / ATCC BAA-672) (Erwinia carotovora subsp. atroseptica)).